Consider the following 289-residue polypeptide: Formamidopyrimidine-DNA glycosylase 1 (289 aa).

The active-site Schiff-base intermediate with DNA is the Pro-2. Glu-3 serves as the catalytic Proton donor. The active-site Proton donor; for beta-elimination activity is Lys-61. The DNA site is built by His-100, Arg-119, and Lys-165. The FPG-type zinc finger occupies 251 to 285 (DAYGREGENCRRCGAVIRRERFMNRSSFYCPRCQP). Arg-275 functions as the Proton donor; for delta-elimination activity in the catalytic mechanism.

It belongs to the FPG family. In terms of assembly, monomer. Zn(2+) serves as cofactor.

It catalyses the reaction Hydrolysis of DNA containing ring-opened 7-methylguanine residues, releasing 2,6-diamino-4-hydroxy-5-(N-methyl)formamidopyrimidine.. It carries out the reaction 2'-deoxyribonucleotide-(2'-deoxyribose 5'-phosphate)-2'-deoxyribonucleotide-DNA = a 3'-end 2'-deoxyribonucleotide-(2,3-dehydro-2,3-deoxyribose 5'-phosphate)-DNA + a 5'-end 5'-phospho-2'-deoxyribonucleoside-DNA + H(+). Involved in base excision repair of DNA damaged by oxidation or by mutagenic agents. Acts as a DNA glycosylase that recognizes and removes damaged bases. Has a preference for oxidized purines, such as 7,8-dihydro-8-oxoguanine (8-oxoG) when paired with C, G or T, as well as methyl-faPy (formanidopyrimidine residues) in poly(dG-dC) and spiroiminodihydantoin:C base pairs. Unlike its E.coli ortholog has no activity on 8-oxoG:A. Has AP (apurinic/apyrimidinic) lyase activity and introduces nicks in the DNA strand. Cleaves the DNA backbone by beta-delta elimination to generate a single-strand break at the site of the removed base with both 3'- and 5'-phosphates. Cleaves ssDNA containing an AP site. Complements the H(2)O(2) sensitivity of an M.smegmatis fpg disruption mutant; upon expression in M.smegmatis excises 8-oxoG from dsDNA. The polypeptide is Formamidopyrimidine-DNA glycosylase 1 (fpg1) (Mycobacterium tuberculosis (strain ATCC 25618 / H37Rv)).